The primary structure comprises 150 residues: Large ribosomal subunit protein bL9 (150 aa).

This sequence belongs to the bacterial ribosomal protein bL9 family.

Its function is as follows. Binds to the 23S rRNA. The protein is Large ribosomal subunit protein bL9 of Alteromonas mediterranea (strain DSM 17117 / CIP 110805 / LMG 28347 / Deep ecotype).